The primary structure comprises 176 residues: Outer membrane protein assembly factor BamE (176 aa).

The first 21 residues, 1 to 21 (MQNAKLMLTCLAFAGLAALAG), serve as a signal peptide directing secretion. Cysteine 22 carries the N-palmitoyl cysteine lipid modification. The S-diacylglycerol cysteine moiety is linked to residue cysteine 22. The segment at 121–176 (KEGSTTVTQPADQQKPEAQKEEPPKPGSTLEQLQREVDEAQPVPVPTPEPLDPSPQ) is disordered. A compositionally biased stretch (polar residues) spans 123 to 132 (GSTTVTQPAD). A compositionally biased stretch (basic and acidic residues) spans 134–144 (QKPEAQKEEPP). Pro residues predominate over residues 163–176 (VPVPTPEPLDPSPQ).

Belongs to the BamE family. As to quaternary structure, part of the Bam complex.

It localises to the cell outer membrane. Its function is as follows. Part of the outer membrane protein assembly complex, which is involved in assembly and insertion of beta-barrel proteins into the outer membrane. May have a structural role in maintaining the cell envelope integrity. The protein is Outer membrane protein assembly factor BamE of Pseudomonas aeruginosa (strain ATCC 15692 / DSM 22644 / CIP 104116 / JCM 14847 / LMG 12228 / 1C / PRS 101 / PAO1).